Reading from the N-terminus, the 938-residue chain is Histone deacetylase 7 (938 aa).

A disordered region spans residues 1-40 (MHSPGAGCPALQPDTPGSQPQPMDLRVGQRPTVEPPPEPA). Positions 1 to 121 (MHSPGAGCPA…LAEVILKKQQ (121 aa)) are interaction with MEF2C. Transcription repression regions lie at residues 2 to 254 (HSPG…DGDR) and 241 to 533 (GPNP…EHAG). The segment at 72–172 (SMDPPMPELQ…LPTEPPEHFP (101 aa)) is interaction with MEF2A. Serine 132 carries the phosphoserine modification. Disordered stretches follow at residues 155 to 280 (SFLP…HHGL), 331 to 361 (SGSG…APLQ), 373 to 463 (LIKP…DSVL), and 472 to 491 (RPLS…LSPE). Serine 178 carries the phosphoserine; by MARK2, MARK3 and PKD/PRKD1 modification. The span at 190–204 (KSLERRKNPLLRKES) shows a compositional bias: basic and acidic residues. Position 204 is a phosphoserine; by PKD/PRKD2 (serine 204). Low complexity predominate over residues 220-235 (SSPSSSSTPASGCSSP). Position 344 is a phosphoserine; by PKD/PRKD1 (serine 344). Phosphoserine is present on residues serine 350 and serine 398. Residues 350–361 (SATASPLLAPLQ) show a composition bias toward low complexity. Composition is skewed to low complexity over residues 429 to 448 (GRGS…EQQH) and 479 to 491 (SSPA…LSPE). Serine 479 is modified (phosphoserine; by PKD/PRKD1). Serine 480 carries the post-translational modification Phosphoserine. The histone deacetylase stretch occupies residues 505–852 (PATGLVYDSV…VAALLGNKVD (348 aa)). Positions 520, 522, and 528 each coordinate Zn(2+). A Phosphoserine modification is found at serine 582. Cysteine 605 is a binding site for Zn(2+). Histidine 657 is a catalytic residue. Residues 864–938 (NLSAIRSLEA…LVEEEEPMNL (75 aa)) are interaction with SIN3A. Residues 904-938 (AEVEAVTALASLSVGILAEDRPSERLVEEEEPMNL) carry the Nuclear export signal motif.

The protein belongs to the histone deacetylase family. HD type 2 subfamily. As to quaternary structure, interacts with HDAC1, HDAC2, HDAC3, HDAC4, HDAC5, NCOR1, NCOR2, SIN3A, SIN3B, RBBP4, RBBP7, MTA1L1, SAP30 and MBD3. Interacts with KAT5 and EDNRA. Interacts with the 14-3-3 protein YWHAE, MEF2A, MEF2B and MEF2C. Interacts with ZMYND15. Interacts with KDM5B. Interacts with PML. Interacts with FOXP3. Interacts with RARA. May be phosphorylated by CaMK1. Phosphorylated by the PKC kinases PKN1 and PKN2, impairing nuclear import. Phosphorylation at Ser-178 by MARK2, MARK3 and PRKD1 promotes interaction with 14-3-3 proteins and export from the nucleus. Phosphorylation at Ser-178 is a prerequisite for phosphorylation at Ser-204. In terms of tissue distribution, highly expressed in heart and lung. Expressed at intermediate level in muscle.

The protein localises to the nucleus. It localises to the cytoplasm. It carries out the reaction N(6)-acetyl-L-lysyl-[histone] + H2O = L-lysyl-[histone] + acetate. It catalyses the reaction N(6)-acetyl-L-lysyl-[protein] + H2O = L-lysyl-[protein] + acetate. With respect to regulation, its activity is inhibited by Trichostatin A (TSA), a known histone deacetylase inhibitor. In terms of biological role, responsible for the deacetylation of lysine residues on the N-terminal part of the core histones (H2A, H2B, H3 and H4). Histone deacetylation gives a tag for epigenetic repression and plays an important role in transcriptional regulation, cell cycle progression and developmental events. Histone deacetylases act via the formation of large multiprotein complexes. Involved in muscle maturation by repressing transcription of myocyte enhancer factors such as MEF2A, MEF2B and MEF2C. During muscle differentiation, it shuttles into the cytoplasm, allowing the expression of myocyte enhancer factors. Positively regulates the transcriptional repressor activity of FOXP3. Serves as a corepressor of RARA, causing its deacetylation and inhibition of RARE DNA element binding. In association with RARA, plays a role in the repression of microRNA-10a and thereby in the inflammatory response. Also acetylates non-histone proteins, such as ALKBH5. The chain is Histone deacetylase 7 (Hdac7) from Mus musculus (Mouse).